The primary structure comprises 208 residues: Proheparin-binding EGF-like growth factor (208 aa).

The signal sequence occupies residues 1 to 23 (MKLLPSVMLKLFLAAVLSALVTG). Positions 24 to 62 (ESLERLRRGLAAATSNPDPPTGSTNQLLPTGGDRAQGVQ) are excised as a propeptide. The Extracellular segment spans residues 24–160 (ESLERLRRGL…ENPLYTYDHT (137 aa)). 2 disordered regions span residues 35–57 (AATSNPDPPTGSTNQLLPTGGDR) and 80–104 (PQGLATPSKERNGKKKKKGKGLGKK). Polar residues predominate over residues 36–51 (ATSNPDPPTGSTNQLL). O-linked (GalNAc...) threonine glycosylation occurs at T85. Basic residues predominate over residues 91 to 102 (NGKKKKKGKGLG). The region spanning 104 to 144 (KRDPCLRKYKDYCIHGECRYLQEFRTPSCKCLPGYHGHRCH) is the EGF-like domain. Disulfide bonds link C108-C121, C116-C132, and C134-C143. Positions 149–208 (PVENPLYTYDHTTVLAVVAVVLSSVCLLVIVGLLMFRYHRRGGYDLESEEKVKLGVASSH) are cleaved as a propeptide — C-terminal. A helical transmembrane segment spans residues 161-184 (TVLAVVAVVLSSVCLLVIVGLLMF). Over 185–208 (RYHRRGGYDLESEEKVKLGVASSH) the chain is Cytoplasmic.

Interacts with FBLN1. Interacts with EGFR and ERBB4. O-glycosylated. In terms of tissue distribution, most abundant in kidney, skeletal muscle, lung, spleen, brain and heart.

The protein localises to the secreted. Its subcellular location is the extracellular space. It localises to the cell membrane. Its function is as follows. Growth factor that mediates its effects via EGFR, ERBB2 and ERBB4. Required for normal cardiac valve formation and normal heart function. Promotes smooth muscle cell proliferation. May be involved in macrophage-mediated cellular proliferation. It is mitogenic for fibroblasts, but not endothelial cells. It is able to bind EGF receptor/EGFR with higher affinity than EGF itself and is a far more potent mitogen for smooth muscle cells than EGF. Also acts as a diphtheria toxin receptor. This is Proheparin-binding EGF-like growth factor (Hbegf) from Mus musculus (Mouse).